Consider the following 944-residue polypeptide: Protein phosphatase 1 regulatory subunit 37 homolog (944 aa).

Residues 42–71 (QQQSHSAATSVRKKTCQDANSSGEDPNGRI) form a disordered region. LRR repeat units lie at residues 203–224 (SCVR…TTIF), 232–255 (SLQM…CKMA), 262–282 (SLTC…LVLI), 290–311 (GLRE…HIYQ), and 318–338 (SLQL…RHIC). The disordered stretch occupies residues 517-598 (EEGDSGVEKK…KERHQRFVRS (82 aa)). The segment covering 522 to 542 (GVEKKDGNECEGEDNKDRQDT) has biased composition (basic and acidic residues). Composition is skewed to polar residues over residues 543–554 (PAETENGVSSNE) and 567–585 (PESN…STSK). Over residues 586–595 (LSRKERHQRF) the composition is skewed to basic residues.

This sequence belongs to the PPP1R37 family.

The sequence is that of Protein phosphatase 1 regulatory subunit 37 homolog from Caenorhabditis elegans.